The chain runs to 248 residues: Ribonuclease PH (248 aa).

Residues Arg86 and 124 to 126 (GTR) each bind phosphate.

It belongs to the RNase PH family. In terms of assembly, homohexameric ring arranged as a trimer of dimers.

It carries out the reaction tRNA(n+1) + phosphate = tRNA(n) + a ribonucleoside 5'-diphosphate. Phosphorolytic 3'-5' exoribonuclease that plays an important role in tRNA 3'-end maturation. Removes nucleotide residues following the 3'-CCA terminus of tRNAs; can also add nucleotides to the ends of RNA molecules by using nucleoside diphosphates as substrates, but this may not be physiologically important. Probably plays a role in initiation of 16S rRNA degradation (leading to ribosome degradation) during starvation. This Clostridium perfringens (strain SM101 / Type A) protein is Ribonuclease PH.